Consider the following 179-residue polypeptide: Transcription initiation factor TFIID subunit 10 (179 aa).

The tract at residues methionine 1 to leucine 23 is disordered.

It belongs to the TAF10 family. In terms of assembly, component of the TFIID basal transcription factor complex, composed of TATA-box-binding protein tbp-1, and a number of TBP-associated factors (TAFs).

The protein localises to the nucleus. In terms of biological role, the TFIID basal transcription factor complex plays a major role in the initiation of RNA polymerase II (Pol II)-dependent transcription. TFIID recognizes and binds promoters via its subunit tbp-1, a TATA-box-binding protein, and promotes assembly of the pre-initiation complex (PIC). The TFIID complex consists of tbp-1 and TBP-associated factors (TAFs), including taf-10. Essential for early embryonic development, but not required for transcription of some genes; probably acts via activating transcription initiation by RNA Pol II, as part of the TFIID complex. The protein is Transcription initiation factor TFIID subunit 10 of Caenorhabditis elegans.